Consider the following 126-residue polypeptide: C-type natriuretic peptide (126 aa).

The signal sequence occupies residues 1-23 (MHLSQLIACALLLALLSLRPSEA). A disordered region spans residues 19–71 (RPSEAKPGTPPKVPRTPPGEELAEPQAAGGNQKKGDKTPGGGGANLKGDRSRL). The propeptide occupies 24 to 73 (KPGTPPKVPRTPPGEELAEPQAAGGNQKKGDKTPGGGGANLKGDRSRLLR). Residues 26–35 (GTPPKVPRTP) show a composition bias toward pro residues. C110 and C126 form a disulfide bridge.

It belongs to the natriuretic peptide family. In terms of processing, degraded by IDE (in vitro). In terms of tissue distribution, expressed exclusively in brain.

It localises to the secreted. In terms of biological role, hormone which plays a role in endochondral ossification through regulation of cartilaginous growth plate chondrocytes proliferation and differentiation. May also be vasoactive and natriuretic. Acts by specifically binding and stimulating NPR2 to produce cGMP. Binds the clearance receptor NPR3. This chain is C-type natriuretic peptide (Nppc), found in Rattus norvegicus (Rat).